A 204-amino-acid polypeptide reads, in one-letter code: Large ribosomal subunit protein eL15z (204 aa).

The tract at residues 161 to 204 (LRGLTSEGKKNRGLRGKGHNNHKNRPSRRATWKKNNSLSLRRYR) is disordered. Over residues 171–192 (NRGLRGKGHNNHKNRPSRRATW) the composition is skewed to basic residues. Over residues 193–204 (KKNNSLSLRRYR) the composition is skewed to polar residues.

The protein belongs to the eukaryotic ribosomal protein eL15 family.

The polypeptide is Large ribosomal subunit protein eL15z (RPL15A) (Arabidopsis thaliana (Mouse-ear cress)).